A 499-amino-acid polypeptide reads, in one-letter code: Probable cytosol aminopeptidase (499 aa).

Residues lysine 263 and aspartate 268 each coordinate Mn(2+). Lysine 275 is an active-site residue. 3 residues coordinate Mn(2+): aspartate 286, aspartate 345, and glutamate 347. Residue arginine 349 is part of the active site.

It belongs to the peptidase M17 family. Mn(2+) is required as a cofactor.

It is found in the cytoplasm. The catalysed reaction is Release of an N-terminal amino acid, Xaa-|-Yaa-, in which Xaa is preferably Leu, but may be other amino acids including Pro although not Arg or Lys, and Yaa may be Pro. Amino acid amides and methyl esters are also readily hydrolyzed, but rates on arylamides are exceedingly low.. It catalyses the reaction Release of an N-terminal amino acid, preferentially leucine, but not glutamic or aspartic acids.. Functionally, presumably involved in the processing and regular turnover of intracellular proteins. Catalyzes the removal of unsubstituted N-terminal amino acids from various peptides. In Chlamydia caviae (strain ATCC VR-813 / DSM 19441 / 03DC25 / GPIC) (Chlamydophila caviae), this protein is Probable cytosol aminopeptidase.